The sequence spans 2338 residues: Proto-oncogene tyrosine-protein kinase ROS (2338 aa).

The first 27 residues, Met1–Gly27, serve as a signal peptide directing secretion. At Thr28–Ser1853 the chain is on the extracellular side. N-linked (GlcNAc...) asparagine glycosylation is found at Asn52 and Asn77. 2 Fibronectin type-III domains span residues Leu110–Thr205 and Ala206–Ala294. 6 N-linked (GlcNAc...) asparagine glycosylation sites follow: Asn333, Asn361, Asn480, Asn623, Asn934, and Asn1010. One can recognise a Fibronectin type-III 3 domain in the interval Leu566–Pro666. Fibronectin type-III domains follow at residues Ile942–Ser1037 and Ala1038–Ile1145. A glycan (N-linked (GlcNAc...) asparagine) is linked at Asn1298. Fibronectin type-III domains lie at Val1440–Gly1548, Val1549–Phe1648, Thr1650–Gly1743, and Val1744–Asp1845. Residue Asn1675 is glycosylated (N-linked (GlcNAc...) asparagine). Residues Phe1854–Trp1874 form a helical membrane-spanning segment. Residues His1875–Glu2338 are Cytoplasmic-facing. The region spanning Leu1937–Phe2210 is the Protein kinase domain. ATP-binding positions include Leu1943–Val1951 and Lys1972. The Proton acceptor role is filled by Asp2071. Tyr2266 bears the Phosphotyrosine; by autocatalysis mark. The disordered stretch occupies residues Glu2277–Tyr2314. Basic and acidic residues predominate over residues Ser2289 to Phe2306. The residue at position 2325 (Tyr2325) is a Phosphotyrosine; by autocatalysis.

It belongs to the protein kinase superfamily. Tyr protein kinase family. Insulin receptor subfamily. Interacts with PTPN11; may activate the PI3 kinase-mTOR signaling pathway. Interacts with VAV3; constitutive interaction mediating VAV3 phosphorylation. Interacts with PTPN6 (via SH2 1 domain); the interaction is direct and promotes ROS1 dephosphorylation. In terms of processing, phosphorylated. Probably autophosphorylates. Phosphorylation at Tyr-2266 is required for the interaction with PTPN6 that mediates ROS1 dephosphorylation. Phosphorylation at Tyr-2266 stimulates the kinase activity and the activation of the ERK1 signaling cascade. Phosphorylation at Tyr-2266 and/or Tyr-2325 recruits PTPN11. As to expression, expressed in heart, lung, kidney and testis.

The protein resides in the cell membrane. The catalysed reaction is L-tyrosyl-[protein] + ATP = O-phospho-L-tyrosyl-[protein] + ADP + H(+). Its activity is regulated as follows. Inhibited by dephosphorylation by PTPN6. Its function is as follows. Orphan receptor tyrosine kinase (RTK) that plays a role in epithelial cell differentiation and regionalization of the proximal epididymal epithelium. NELL2 is an endogenous ligand for ROS1. Upon endogenous stimulation by NELL2, ROS1 activates the intracellular signaling pathway and triggers epididymal epithelial differentiation and subsequent sperm maturation. May activate several downstream signaling pathways related to cell differentiation, proliferation, growth and survival including the PI3 kinase-mTOR signaling pathway. Mediates the phosphorylation of PTPN11, an activator of this pathway. May also phosphorylate and activate the transcription factor STAT3 to control anchorage-independent cell growth. Mediates the phosphorylation and the activation of VAV3, a guanine nucleotide exchange factor regulating cell morphology. May activate other downstream signaling proteins including AKT1, MAPK1, MAPK3, IRS1 and PLCG2. In Rattus norvegicus (Rat), this protein is Proto-oncogene tyrosine-protein kinase ROS (Ros1).